The sequence spans 277 residues: Ubiquinone biosynthesis protein COQ4, mitochondrial (277 aa).

Residues 1–14 constitute a mitochondrion transit peptide; it reads MLTKRALRTTDPYR. Positions 157, 158, 161, and 173 each coordinate Zn(2+).

This sequence belongs to the COQ4 family. Component of a multi-subunit COQ enzyme complex, composed of at least COQ3, COQ4, COQ5, COQ6, COQ7 and COQ9. Requires Zn(2+) as cofactor.

The protein localises to the mitochondrion inner membrane. It catalyses the reaction a 4-hydroxy-3-methoxy-5-(all-trans-polyprenyl)benzoate + H(+) = a 2-methoxy-6-(all-trans-polyprenyl)phenol + CO2. Its pathway is cofactor biosynthesis; ubiquinone biosynthesis. Functionally, lyase that catalyzes the C1-decarboxylation of 4-hydroxy-3-methoxy-5-(all-trans-polyprenyl)benzoic acid into 2-methoxy-6-(all-trans-polyprenyl)phenol during ubiquinone biosynthesis. The protein is Ubiquinone biosynthesis protein COQ4, mitochondrial of Ajellomyces capsulatus (strain NAm1 / WU24) (Darling's disease fungus).